Reading from the N-terminus, the 206-residue chain is uncharacterized protein (206 aa).

A helical transmembrane segment spans residues leucine 4–isoleucine 24.

It localises to the membrane. This is an uncharacterized protein from Mycobacterium tuberculosis (strain CDC 1551 / Oshkosh).